A 395-amino-acid polypeptide reads, in one-letter code: Elongation factor Tu (395 aa).

The tr-type G domain maps to 10-204; it reads KPHVNVGTIG…AVDEYIPEPV (195 aa). Residues 19–26 are G1; it reads GHVDHGKT. Residue 19–26 coordinates GTP; it reads GHVDHGKT. Thr-26 serves as a coordination point for Mg(2+). The tract at residues 60-64 is G2; that stretch reads GITIA. The segment at 81 to 84 is G3; that stretch reads DCPG. GTP-binding positions include 81-85 and 136-139; these read DCPGH and NKVD. The G4 stretch occupies residues 136 to 139; sequence NKVD. The interval 174–176 is G5; that stretch reads SAL.

This sequence belongs to the TRAFAC class translation factor GTPase superfamily. Classic translation factor GTPase family. EF-Tu/EF-1A subfamily. In terms of assembly, monomer.

The protein localises to the cytoplasm. It carries out the reaction GTP + H2O = GDP + phosphate + H(+). In terms of biological role, GTP hydrolase that promotes the GTP-dependent binding of aminoacyl-tRNA to the A-site of ribosomes during protein biosynthesis. The protein is Elongation factor Tu of Exiguobacterium sp. (strain ATCC BAA-1283 / AT1b).